Consider the following 353-residue polypeptide: Photosystem II protein D1 (353 aa).

Threonine 2 carries the N-acetylthreonine modification. The residue at position 2 (threonine 2) is a Phosphothreonine. 3 helical membrane-spanning segments follow: residues 29–46 (YIGW…TATS), 118–133 (HFFI…EWEL), and 142–156 (WIAV…AATA). Histidine 118 serves as a coordination point for chlorophyll a. Tyrosine 126 contacts pheophytin a. The [CaMn4O5] cluster site is built by aspartate 170 and glutamate 189. Residues 197-218 (FHMLGVAGVFGGSLFSAMHGSL) form a helical membrane-spanning segment. Chlorophyll a is bound at residue histidine 198. Residues histidine 215 and 264 to 265 (SF) contribute to the a quinone site. Residue histidine 215 coordinates Fe cation. Histidine 272 contacts Fe cation. The chain crosses the membrane as a helical span at residues 274–288 (FLAAWPVIGIWFTAL). Positions 332, 333, 342, and 344 each coordinate [CaMn4O5] cluster. Residues 345–353 (AFEAPSINA) constitute a propeptide that is removed on maturation.

This sequence belongs to the reaction center PufL/M/PsbA/D family. In terms of assembly, PSII is composed of 1 copy each of membrane proteins PsbA, PsbB, PsbC, PsbD, PsbE, PsbF, PsbH, PsbI, PsbJ, PsbK, PsbL, PsbM, PsbT, PsbX, PsbY, PsbZ, Psb30/Ycf12, at least 3 peripheral proteins of the oxygen-evolving complex and a large number of cofactors. It forms dimeric complexes. The D1/D2 heterodimer binds P680, chlorophylls that are the primary electron donor of PSII, and subsequent electron acceptors. It shares a non-heme iron and each subunit binds pheophytin, quinone, additional chlorophylls, carotenoids and lipids. D1 provides most of the ligands for the Mn4-Ca-O5 cluster of the oxygen-evolving complex (OEC). There is also a Cl(-1) ion associated with D1 and D2, which is required for oxygen evolution. The PSII complex binds additional chlorophylls, carotenoids and specific lipids. is required as a cofactor. Tyr-161 forms a radical intermediate that is referred to as redox-active TyrZ, YZ or Y-Z. Post-translationally, C-terminally processed by CTPA; processing is essential to allow assembly of the oxygen-evolving complex and thus photosynthetic growth.

The protein localises to the plastid. It is found in the chloroplast thylakoid membrane. The enzyme catalyses 2 a plastoquinone + 4 hnu + 2 H2O = 2 a plastoquinol + O2. In terms of biological role, photosystem II (PSII) is a light-driven water:plastoquinone oxidoreductase that uses light energy to abstract electrons from H(2)O, generating O(2) and a proton gradient subsequently used for ATP formation. It consists of a core antenna complex that captures photons, and an electron transfer chain that converts photonic excitation into a charge separation. The D1/D2 (PsbA/PsbD) reaction center heterodimer binds P680, the primary electron donor of PSII as well as several subsequent electron acceptors. This chain is Photosystem II protein D1, found in Chlamydomonas moewusii (Chlamydomonas eugametos).